The primary structure comprises 383 residues: ATP phosphoribosyltransferase regulatory subunit (383 aa).

It belongs to the class-II aminoacyl-tRNA synthetase family. HisZ subfamily. As to quaternary structure, heteromultimer composed of HisG and HisZ subunits.

The protein localises to the cytoplasm. The protein operates within amino-acid biosynthesis; L-histidine biosynthesis; L-histidine from 5-phospho-alpha-D-ribose 1-diphosphate: step 1/9. Its function is as follows. Required for the first step of histidine biosynthesis. May allow the feedback regulation of ATP phosphoribosyltransferase activity by histidine. In Neisseria gonorrhoeae (strain ATCC 700825 / FA 1090), this protein is ATP phosphoribosyltransferase regulatory subunit.